The primary structure comprises 224 residues: GTP-binding protein RHO3 (224 aa).

22–29 (GDGACGKT) provides a ligand contact to GTP. The short motif at 44 to 52 (YEPTVFENY) is the Effector region element. GTP contacts are provided by residues 69–73 (DTAGQ) and 127–130 (LKCD). The disordered stretch occupies residues 205 to 224 (TPKGARDSAPEAESSSCTIM). Position 221 is a cysteine methyl ester (cysteine 221). Cysteine 221 carries the S-geranylgeranyl cysteine lipid modification. Positions 222–224 (TIM) are cleaved as a propeptide — removed in mature form.

It belongs to the small GTPase superfamily. Rho family.

It localises to the cell membrane. Involved in the regulation of actin polarization. Rho proteins are required for distinct steps during polarized hyphal growth of A.gossypii. The sequence is that of GTP-binding protein RHO3 (RHO3) from Eremothecium gossypii (strain ATCC 10895 / CBS 109.51 / FGSC 9923 / NRRL Y-1056) (Yeast).